The following is a 2178-amino-acid chain: Toxin A (2178 aa).

The tract at residues 1-93 (MLITREQLMK…RELIKNSRTS (93 aa)) is four-helical bundle. Residues 98–474 (KNLSFIWIGG…KPEVNSTVFF (377 aa)) enclose the GT44 domain. The tract at residues 98-474 (KNLSFIWIGG…KPEVNSTVFF (377 aa)) is glucosyltransferase region. An N-acetylglucosaminyltransferase region region spans residues 98 to 474 (KNLSFIWIGG…KPEVNSTVFF (377 aa)). UDP-N-acetyl-alpha-D-glucosamine-binding positions include 103–105 (IWI), asparagine 141, 267–271 (SDILR), and 284–286 (DLD). Mg(2+) is bound by residues aspartate 284, aspartate 286, and glutamate 520. 523–525 (SSW) contributes to the UDP-N-acetyl-alpha-D-glucosamine binding site. Positions 549–806 (NYEDGLNFNK…RVEQLNKVAE (258 aa)) are autoprocessing region. 1D-myo-inositol hexakisphosphate is bound by residues asparagine 557, lysine 607, and lysine 651. Residues 574–787 (VNSTKIYENY…QISNKYVVYW (214 aa)) form the Peptidase C80 domain. Histidine 657 functions as the For protease activity in the catalytic mechanism. The active-site Nucleophile; for protease activity is the cysteine 707. Residues 758-759 (KR) and lysine 782 contribute to the 1D-myo-inositol hexakisphosphate site. Positions 807 to 1485 (FAKDINSIIQ…VYMEGKIFLN (679 aa)) are translocation region. Cell wall-binding repeat units lie at residues 1799-1818 (EYGWINIDSRWYFFDSINLI), 1820-1839 (KKGYQEIEGERYYFNPNTGV), 1870-1889 (YTGWLTLDGNKYYFQSNSKA), 1890-1909 (VTGLQKISDKYYYFNDNGQM), 1910-1929 (QIKWQIINNNKYYFDGNTGE), 1931-1950 (IIGWFNNNKERYYFDSEGRL), 1951-1970 (LTGYQVIGDKSYYFSDNING), 2004-2023 (YKGWLDLNGNKYYFNSDSIA), 2024-2043 (VTGSYNIKGIQYYFNPKTAV), 2045-2060 (TNGWYTLDNNNYYVSN), 2064-2083 (VLGYQDIDGKGYYFDPSTGI), 2114-2133 (YTGWLHLNGNKYYFGYYNSA), 2134-2153 (VTGWRVLGGKRYFFNIKTGA), and 2155-2174 (TTGLLTLSGKRYYFNEKGEQ).

Belongs to the clostridial glucosylating toxin (LCGT) family. Mn(2+) is required as a cofactor. It depends on Mg(2+) as a cofactor. Undergoes autocatalytic cleavage to release the N-terminal part (N-acetylglucosaminyltransferase TcdA), which constitutes the active part of the toxin, in the host cytosol. 1D-myo-inositol hexakisphosphate-binding (InsP6) activates the peptidase C80 domain and promotes autoprocessing.

It is found in the secreted. The protein resides in the host endosome membrane. It localises to the host cytoplasm. Its subcellular location is the host cytosol. The protein localises to the host cell membrane. The catalysed reaction is L-threonyl-[protein] + UDP-N-acetyl-alpha-D-glucosamine = 3-O-(N-acetyl-alpha-D-glucosaminyl)-L-threonyl-[protein] + UDP + H(+). Its activity is regulated as follows. Protease activity is activated upon binding to 1D-myo-inositol hexakisphosphate (InsP6), which induces conformational reorganization. In terms of biological role, precursor of a cytotoxin, which enters into host cells and mediates autoprocessing to release the active toxin (N-acetylglucosaminyltransferase TcdA) into the host cytosol. Once entered into host cells, acidification in the endosome promotes the membrane insertion of the translocation region and formation of a pore, leading to translocation of the GT44 and peptidase C80 domains across the endosomal membrane. This activates the peptidase C80 domain and autocatalytic processing, releasing the N-terminal part (N-acetylglucosaminyltransferase TcdA), which constitutes the active part of the toxin, in the cytosol. Its function is as follows. Active form of the toxin, which is released into the host cytosol following autoprocessing and inactivates small GTPases. Acts by mediating monoglycosylation of small GTPases of the Rho family (Rac1, RhoA, RhoG and Cdc42) in host cells at the conserved threonine residue located in the switch I region ('Thr-37/35'), using UDP-N-acetyl-alpha-D-glucosamine as the sugar donor. Monoglycosylation of host small GTPases completely prevents the recognition of the downstream effector, blocking the GTPases in their inactive form, leading to actin cytoskeleton disruption and cell death. The protein is Toxin A (tcdA) of Clostridium novyi.